Reading from the N-terminus, the 387-residue chain is Methylthioribose-1-phosphate isomerase (387 aa).

Catalysis depends on D257, which acts as the Proton donor.

It belongs to the eIF-2B alpha/beta/delta subunits family. MtnA subfamily.

The protein resides in the cytoplasm. The protein localises to the nucleus. It carries out the reaction 5-(methylsulfanyl)-alpha-D-ribose 1-phosphate = 5-(methylsulfanyl)-D-ribulose 1-phosphate. It participates in amino-acid biosynthesis; L-methionine biosynthesis via salvage pathway; L-methionine from S-methyl-5-thio-alpha-D-ribose 1-phosphate: step 1/6. Catalyzes the interconversion of methylthioribose-1-phosphate (MTR-1-P) into methylthioribulose-1-phosphate (MTRu-1-P). The protein is Methylthioribose-1-phosphate isomerase (mri1) of Neosartorya fischeri (strain ATCC 1020 / DSM 3700 / CBS 544.65 / FGSC A1164 / JCM 1740 / NRRL 181 / WB 181) (Aspergillus fischerianus).